Consider the following 283-residue polypeptide: Pantothenate synthetase (283 aa).

An ATP-binding site is contributed by 31–38 (MGALHDGH). His38 (proton donor) is an active-site residue. Residue Gln62 coordinates (R)-pantoate. Gln62 provides a ligand contact to beta-alanine. 148–151 (GKKD) contributes to the ATP binding site. Gln154 is a (R)-pantoate binding site. Residues Val177 and 185–188 (KSSR) contribute to the ATP site.

The protein belongs to the pantothenate synthetase family. In terms of assembly, homodimer.

It is found in the cytoplasm. It catalyses the reaction (R)-pantoate + beta-alanine + ATP = (R)-pantothenate + AMP + diphosphate + H(+). It participates in cofactor biosynthesis; (R)-pantothenate biosynthesis; (R)-pantothenate from (R)-pantoate and beta-alanine: step 1/1. Functionally, catalyzes the condensation of pantoate with beta-alanine in an ATP-dependent reaction via a pantoyl-adenylate intermediate. The chain is Pantothenate synthetase from Staphylococcus aureus (strain MRSA252).